The chain runs to 759 residues: MRTSPRRPLILKRRKLSLPHQDATPCPGASEQGKAAMMKTANLPEQTLAHELEDMAPKSKADQETPGQNEGGDTLGQSLAPTMRLPSNPPQSCPEDIPGFPSGVRIMGHPTMADAQLVIIPSQSNVQSIIQALTARGKEQGGPNKYIIISSESAIQTQAWHQGPQIKEEECVNSQSEATCISKQKPTGNSRKAKHRQEEQLNASLSNIQWLGNMSSESLGQYSIKEEQEDKENQIPECAKMEEEPQSFPDPQWPLSVTERPPYSYMALIQFAINSTPRKRMTLKDIYTWIEDHFPYFKHVAKPGWKNSIRHNLSLHDMFVRESEANNKVSYWTIHPQANRCLTLDQVFKTASPMSPADNEPQKKMIPDIRKSFQSAACASNKERKMKPLLPRVNSYLIPVHFPVAQPVLLPALEPYAFGAESSDGQQSSKRVKIAPKATADDGESPKHLGLCSVKEEPDISNLKCEDLFQCKRVSSSRRKQQLLPPHSEEPELVLPESIASDSGLDTDFSFIQDASANPNQNLTSHPTQNCPSNVTQEGLLHLTHDGPSYLTQVSSSHFTQDDPCQFTKDDTFYFTQDNPIQLTQDEDYTFKTPIKEHFSKPTTSSTPSKPTDTGLLQPWESETSLPRDPVLDFSPVRIPQGSTFTPFKDNLGTLSFGDTPFKDFGIFGSPQNLLNALSPASSPLLRLESPCVSRQQKRCSKELQVGASANRSLLEGLVLDTVDDSLSKILLDISFSGMEEGNGLEVDGVWSQFLPEFK.

Residues 1–92 (MRTSPRRPLI…MRLPSNPPQS (92 aa)) are disordered. A compositionally biased stretch (basic and acidic residues) spans 48-63 (LAHELEDMAPKSKADQ). The segment at residues 260 to 358 (RPPYSYMALI…KTASPMSPAD (99 aa)) is a DNA-binding region (fork-head). Disordered stretches follow at residues 420-450 (AESS…KHLG), 516-535 (SANP…PSNV), and 596-631 (KEHF…RDPV). Positions 601–612 (KPTTSSTPSKPT) are enriched in low complexity.

In terms of tissue distribution, localized to the animal hemisphere of early cleavage stage embryos. During neurulation, expressed in the neural folds. Later, expressed in the spinal cord and in the eye field. During tailbud stages, expression is still restricted to the neuroectoderm, predominantly to the hindbrain, the eye and the spinal cord. With ongoing development, expression is also found at lower levels in the branchial arches. At stage 35, expressed in the rhombencephalon and in the eye retina.

It is found in the nucleus. Functionally, transcription factor regulating the expression of cell cycle genes essential for DNA replication and mitosis. Plays a role in the control of cell proliferation. Also plays a role in DNA break repair, participating in the DNA damage checkpoint response. Promotes transcription of PHB2. The chain is Forkhead box protein M1 from Xenopus laevis (African clawed frog).